The sequence spans 351 residues: MYSLARPLLFSLDAERAHALALRSIDTAYRTGTTSLLSTRPVPLPTPAFGLMFPNPVGLGAGLDKNGEHIDALLALGFGFVEIGTVTPRAQDGNPKPRMFRLPEYQAVINRMGFNNLGVDALVANVQRARRRGGLLGINIGKNKDTPNEEATSDYRYCMERVYPLADYITVNISSPNTAGLRELQEEQSLRRLISDLRETQEALGAQHGKRVPMLVKVAPDLNDRDIDAAARVLADLAVDGVIATNTTVTRPLIANHPLAAEAGGLSGAPLLGQSTLVLRRLRARLPESIPLIGVGGINSGADAVAKMAAGASLVQCYSGLVYRGPQLVGECVNAIRRRREAPSSGAVAPL.

FMN contacts are provided by residues 61 to 65 (AGLDK) and T85. K65 lines the substrate pocket. 110-114 (NRMGF) is a binding site for substrate. Residues N139 and N172 each coordinate FMN. N172 contacts substrate. S175 functions as the Nucleophile in the catalytic mechanism. N177 is a binding site for substrate. K217 and T245 together coordinate FMN. 246 to 247 (NT) is a substrate binding site. Residues G268, G297, and 318–319 (YS) each bind FMN.

This sequence belongs to the dihydroorotate dehydrogenase family. Type 2 subfamily. Monomer. It depends on FMN as a cofactor.

It is found in the cell membrane. It carries out the reaction (S)-dihydroorotate + a quinone = orotate + a quinol. It functions in the pathway pyrimidine metabolism; UMP biosynthesis via de novo pathway; orotate from (S)-dihydroorotate (quinone route): step 1/1. Its function is as follows. Catalyzes the conversion of dihydroorotate to orotate with quinone as electron acceptor. The protein is Dihydroorotate dehydrogenase (quinone) of Xanthomonas oryzae pv. oryzae (strain PXO99A).